The sequence spans 526 residues: Meiotically up-regulated gene 99 protein, mitochondrial (526 aa).

Helical transmembrane passes span 398-418 and 421-441; these read TLYT…LYFV and FSLY…LYYL.

The protein resides in the mitochondrion membrane. Functionally, required for correct meiotic chromosome segregation. Appears to also have role in sporulation. This is Meiotically up-regulated gene 99 protein, mitochondrial (mug99) from Schizosaccharomyces pombe (strain 972 / ATCC 24843) (Fission yeast).